Consider the following 481-residue polypeptide: Membrane-bound lytic murein transglycosylase F (481 aa).

The first 21 residues, 1–21 (MKPLKLNYFFIGIITLLLALA), serve as a signal peptide directing secretion. A non-LT domain region spans residues 22 to 268 (LWPSIPWRSS…RLEEKYLGHV (247 aa)). Positions 269–481 (GEFDYVDTTT…PAVPLTKVPE (213 aa)) are LT domain. E313 is an active-site residue.

In the N-terminal section; belongs to the bacterial solute-binding protein 3 family. The protein in the C-terminal section; belongs to the transglycosylase Slt family.

It localises to the cell outer membrane. It carries out the reaction Exolytic cleavage of the (1-&gt;4)-beta-glycosidic linkage between N-acetylmuramic acid (MurNAc) and N-acetylglucosamine (GlcNAc) residues in peptidoglycan, from either the reducing or the non-reducing ends of the peptidoglycan chains, with concomitant formation of a 1,6-anhydrobond in the MurNAc residue.. Functionally, murein-degrading enzyme that degrades murein glycan strands and insoluble, high-molecular weight murein sacculi, with the concomitant formation of a 1,6-anhydromuramoyl product. Lytic transglycosylases (LTs) play an integral role in the metabolism of the peptidoglycan (PG) sacculus. Their lytic action creates space within the PG sacculus to allow for its expansion as well as for the insertion of various structures such as secretion systems and flagella. In Pectobacterium atrosepticum (strain SCRI 1043 / ATCC BAA-672) (Erwinia carotovora subsp. atroseptica), this protein is Membrane-bound lytic murein transglycosylase F.